The following is a 92-amino-acid chain: Small ribosomal subunit protein uS19c (92 aa).

Belongs to the universal ribosomal protein uS19 family.

Its subcellular location is the plastid. The protein localises to the chloroplast. Functionally, protein S19 forms a complex with S13 that binds strongly to the 16S ribosomal RNA. The chain is Small ribosomal subunit protein uS19c from Adiantum capillus-veneris (Maidenhair fern).